Reading from the N-terminus, the 428-residue chain is Cytochrome c biogenesis protein CcsB (428 aa).

3 helical membrane passes run 14-34 (LRFA…GTFI), 72-92 (SIWF…CSFR), and 162-182 (IGPL…AYGS).

This sequence belongs to the Ccs1/CcsB family. In terms of assembly, may interact with CcsA.

It is found in the cellular thylakoid membrane. Functionally, required during biogenesis of c-type cytochromes (cytochrome c6 and cytochrome f) at the step of heme attachment. The protein is Cytochrome c biogenesis protein CcsB of Prochlorococcus marinus (strain MIT 9312).